Here is a 72-residue protein sequence, read N- to C-terminus: uncharacterized protein (72 aa).

Positions 1-53 are disordered; that stretch reads MTNEPSTSTPTSTSTSTSTSTSTSTTTLTSTSSTPTSTSTSTSTSTSTSTSTS.

This is an uncharacterized protein from Dictyostelium discoideum (Social amoeba).